The primary structure comprises 555 residues: MAIEGGERTCGVHELICIRKVSPEAVGFLSAVGVFIILMLLLFLYINKKFCFENVGGFPDLGSEYSTRKNSQDKIYNSYMDKDEHGSSSESEDEALGKYHEALSRTHNSRLPLADSRQRNYAWETRQKYSPLSAEYDGYSSEASIDEGNCIQRMRRTPPLDELQPPPYQDDSGSPHLSCTPSEIGDSKCEFSHCSNSPRCSYNKCPSEGSTGHEIESFHNKGYEEDVPSDSTAVLSPEDMSAQGSSSQLPKPFDPEPEAKYGTLDVTFDYDSQEQKLLVTVTAVTDIPTYNRTGGNSWQVHLVLLPIKKQRAKTSIQRGPCPVFTETFKFNHVESEMIGNYAVRFRLYGVHRMKKEKIVGEKIFYLTKLNLQGKMSLPVILEPSYNHSGCDSQMSVSEMSCSESTSSCQSLEHGSVPEILIGLLYNATTGRLSAEVIKGSHFKNLAANRPPNTYVKLTLLNSMGQEMSKCKTSIRRGQPNPVYKETFVFQVALFQLSDVTLILSVYNKRSMKRKEMIGWISLGLNSSGEEELNHWTEMKESKGQQVCRWHALLES.

Topologically, residues 1-24 are extracellular; it reads MAIEGGERTCGVHELICIRKVSPE. The chain crosses the membrane as a helical; Signal-anchor for type III membrane protein span at residues 25–47; it reads AVGFLSAVGVFIILMLLLFLYIN. The Cytoplasmic segment spans residues 48 to 555; sequence KKFCFENVGG…VCRWHALLES (508 aa). Disordered stretches follow at residues 157-179 and 222-257; these read TPPLDELQPPPYQDDSGSPHLSC and GYEEDVPSDSTAVLSPEDMSAQGSSSQLPKPFDPEP. C2 domains follow at residues 260–379 and 415–550; these read KYGT…SLPV and SVPE…CRWH.

This sequence belongs to the synaptotagmin family. In terms of assembly, homodimer. Can also form heterodimers. In terms of tissue distribution, highly expressed in fetal and adult brain tissue.

It is found in the membrane. Its function is as follows. May be involved in the trafficking and exocytosis of secretory vesicles in non-neuronal tissues. Is Ca(2+)-independent. The sequence is that of Synaptotagmin-14 (SYT14) from Homo sapiens (Human).